Consider the following 557-residue polypeptide: Dihydroxy-acid dehydratase (557 aa).

Residue Asp-78 coordinates Mg(2+). Cys-119 is a [2Fe-2S] cluster binding site. Positions 120 and 121 each coordinate Mg(2+). The residue at position 121 (Lys-121) is an N6-carboxylysine. Cys-192 serves as a coordination point for [2Fe-2S] cluster. Glu-446 is a binding site for Mg(2+). Catalysis depends on Ser-472, which acts as the Proton acceptor.

This sequence belongs to the IlvD/Edd family. As to quaternary structure, homodimer. Requires [2Fe-2S] cluster as cofactor. Mg(2+) serves as cofactor.

It carries out the reaction (2R)-2,3-dihydroxy-3-methylbutanoate = 3-methyl-2-oxobutanoate + H2O. It catalyses the reaction (2R,3R)-2,3-dihydroxy-3-methylpentanoate = (S)-3-methyl-2-oxopentanoate + H2O. It participates in amino-acid biosynthesis; L-isoleucine biosynthesis; L-isoleucine from 2-oxobutanoate: step 3/4. The protein operates within amino-acid biosynthesis; L-valine biosynthesis; L-valine from pyruvate: step 3/4. Its function is as follows. Functions in the biosynthesis of branched-chain amino acids. Catalyzes the dehydration of (2R,3R)-2,3-dihydroxy-3-methylpentanoate (2,3-dihydroxy-3-methylvalerate) into 2-oxo-3-methylpentanoate (2-oxo-3-methylvalerate) and of (2R)-2,3-dihydroxy-3-methylbutanoate (2,3-dihydroxyisovalerate) into 2-oxo-3-methylbutanoate (2-oxoisovalerate), the penultimate precursor to L-isoleucine and L-valine, respectively. In Campylobacter curvus (strain 525.92), this protein is Dihydroxy-acid dehydratase.